Reading from the N-terminus, the 443-residue chain is MEKIIVSGGHQLNGTVRLEGAKNAVLPVLAASLIASEGESVIKEVPVLADVYTINEVLRNLNAEVEFDSTTKTVNINASQQLETEAPFEYVRKMRASVLVLGPLLARYGHAKVAMPGGCAIGSRPIDLHLKGFEAMGAEIHVGNGYVEANVNGRLQGAKIYLDMPSVGATENIMMAAALAEGKTVIENAAKEPEIVDLANYLNKMGANIVGAGTETIRIIGVEKLRGTEHMIIPDRIEAGTFMVASAITGGNVFIENAMREHLRSVISKLEEMNVDVIDENGGLRIIGPEKLKSTDIKTLPHPGFPTDMQSQMMSLMLRAEGTGVITETVFENRFMHVEEFRRMNANIKIEGRSVIIEGISELQGAEVAATDLRAAAALILAGLVSDGYTRVTELKHLDRGYVDIVDKLAALGADIKRVDENGVVVQPLYVTAAKESNEIAAD.

22 to 23 (KN) contacts phosphoenolpyruvate. UDP-N-acetyl-alpha-D-glucosamine is bound at residue Arg-95. The active-site Proton donor is the Cys-119. Cys-119 is modified (2-(S-cysteinyl)pyruvic acid O-phosphothioketal). UDP-N-acetyl-alpha-D-glucosamine is bound by residues 124 to 128 (RPIDL), Asp-308, and Val-330.

The protein belongs to the EPSP synthase family. MurA subfamily.

The protein resides in the cytoplasm. The catalysed reaction is phosphoenolpyruvate + UDP-N-acetyl-alpha-D-glucosamine = UDP-N-acetyl-3-O-(1-carboxyvinyl)-alpha-D-glucosamine + phosphate. The protein operates within cell wall biogenesis; peptidoglycan biosynthesis. In terms of biological role, cell wall formation. Adds enolpyruvyl to UDP-N-acetylglucosamine. This chain is UDP-N-acetylglucosamine 1-carboxyvinyltransferase 1, found in Oceanobacillus iheyensis (strain DSM 14371 / CIP 107618 / JCM 11309 / KCTC 3954 / HTE831).